Consider the following 133-residue polypeptide: DNA-directed RNA polymerase subunit omega (133 aa).

Belongs to the RNA polymerase subunit omega family. As to quaternary structure, the RNAP catalytic core consists of 2 alpha, 1 beta, 1 beta' and 1 omega subunit. When a sigma factor is associated with the core the holoenzyme is formed, which can initiate transcription.

It catalyses the reaction RNA(n) + a ribonucleoside 5'-triphosphate = RNA(n+1) + diphosphate. Functionally, promotes RNA polymerase assembly. Latches the N- and C-terminal regions of the beta' subunit thereby facilitating its interaction with the beta and alpha subunits. In Mesorhizobium japonicum (strain LMG 29417 / CECT 9101 / MAFF 303099) (Mesorhizobium loti (strain MAFF 303099)), this protein is DNA-directed RNA polymerase subunit omega.